The following is a 380-amino-acid chain: Queuine tRNA-ribosyltransferase (380 aa).

Asp-95 functions as the Proton acceptor in the catalytic mechanism. Residues 95–99 (DSGGF), Asp-149, Gln-192, and Gly-219 contribute to the substrate site. An RNA binding region spans residues 250 to 256 (GVGSPDA). Asp-269 acts as the Nucleophile in catalysis. The segment at 274–278 (TRIAR) is RNA binding; important for wobble base 34 recognition. Positions 307, 309, 312, and 338 each coordinate Zn(2+).

The protein belongs to the queuine tRNA-ribosyltransferase family. As to quaternary structure, homodimer. Within each dimer, one monomer is responsible for RNA recognition and catalysis, while the other monomer binds to the replacement base PreQ1. The cofactor is Zn(2+).

It catalyses the reaction 7-aminomethyl-7-carbaguanine + guanosine(34) in tRNA = 7-aminomethyl-7-carbaguanosine(34) in tRNA + guanine. The protein operates within tRNA modification; tRNA-queuosine biosynthesis. Catalyzes the base-exchange of a guanine (G) residue with the queuine precursor 7-aminomethyl-7-deazaguanine (PreQ1) at position 34 (anticodon wobble position) in tRNAs with GU(N) anticodons (tRNA-Asp, -Asn, -His and -Tyr). Catalysis occurs through a double-displacement mechanism. The nucleophile active site attacks the C1' of nucleotide 34 to detach the guanine base from the RNA, forming a covalent enzyme-RNA intermediate. The proton acceptor active site deprotonates the incoming PreQ1, allowing a nucleophilic attack on the C1' of the ribose to form the product. After dissociation, two additional enzymatic reactions on the tRNA convert PreQ1 to queuine (Q), resulting in the hypermodified nucleoside queuosine (7-(((4,5-cis-dihydroxy-2-cyclopenten-1-yl)amino)methyl)-7-deazaguanosine). In Pediococcus pentosaceus (strain ATCC 25745 / CCUG 21536 / LMG 10740 / 183-1w), this protein is Queuine tRNA-ribosyltransferase.